Consider the following 428-residue polypeptide: Magnesium transporter MRS2-C (428 aa).

2 helical membrane-spanning segments follow: residues 364 to 384 (LLLT…GVFG) and 400 to 420 (WTLV…IWYF). A Required for magnesium transport activity motif is present at residues 384–386 (GMN).

This sequence belongs to the CorA metal ion transporter (MIT) (TC 1.A.35.5) family.

It is found in the membrane. Functionally, magnesium transporter that may mediate the influx of magnesium. This is Magnesium transporter MRS2-C from Oryza sativa subsp. indica (Rice).